A 357-amino-acid polypeptide reads, in one-letter code: MTVKKNIVIAGGGTGGHIYPGIAIARALQKLDPSIEVHFVGTARGLESKIVPREGFPLHLIESGQLNVKSPIQKMKTLLKIPVGLWQSIRLLGQLKPLYVIGVGGYASGPFVLAASIIGFNTAVWEPNAMPGMANRILSRFVDKCFVVFNEAKKHLKGDSIIQTGMPVRAEIEAAVHDSSENQKFHLLAFGGSQGSRIINNCLSDAVLGGGDWVKDLSVVHQLGSADFQAVSEKYKNAPCEVQPFEFIYDMAKYYQWADIIVCRGGASSIAEAAAFGIIPIIVPLPAADNHQQKNAESLVEKNAGRMILQKDLTPERLISEVQSLRADKALREQMVRNIKNFYIPQSATVIAKEILQ.

UDP-N-acetyl-alpha-D-glucosamine-binding positions include 14-16 (TGG), N128, R169, S193, I248, and Q292.

The protein belongs to the glycosyltransferase 28 family. MurG subfamily.

It is found in the cell inner membrane. It carries out the reaction di-trans,octa-cis-undecaprenyl diphospho-N-acetyl-alpha-D-muramoyl-L-alanyl-D-glutamyl-meso-2,6-diaminopimeloyl-D-alanyl-D-alanine + UDP-N-acetyl-alpha-D-glucosamine = di-trans,octa-cis-undecaprenyl diphospho-[N-acetyl-alpha-D-glucosaminyl-(1-&gt;4)]-N-acetyl-alpha-D-muramoyl-L-alanyl-D-glutamyl-meso-2,6-diaminopimeloyl-D-alanyl-D-alanine + UDP + H(+). It functions in the pathway cell wall biogenesis; peptidoglycan biosynthesis. Cell wall formation. Catalyzes the transfer of a GlcNAc subunit on undecaprenyl-pyrophosphoryl-MurNAc-pentapeptide (lipid intermediate I) to form undecaprenyl-pyrophosphoryl-MurNAc-(pentapeptide)GlcNAc (lipid intermediate II). The chain is UDP-N-acetylglucosamine--N-acetylmuramyl-(pentapeptide) pyrophosphoryl-undecaprenol N-acetylglucosamine transferase from Bdellovibrio bacteriovorus (strain ATCC 15356 / DSM 50701 / NCIMB 9529 / HD100).